A 359-amino-acid chain; its full sequence is Glucose 1-dehydrogenase (359 aa).

Cys-39 serves as a coordination point for Zn(2+). Thr-41 serves as a coordination point for substrate. Zn(2+)-binding residues include His-64 and Glu-65. Substrate contacts are provided by Glu-116 and Glu-152. Glu-152 serves as a coordination point for Zn(2+). 183–186 (AGPI) is an NADP(+) binding site.

This sequence belongs to the zinc-containing alcohol dehydrogenase family. Glucose 1-dehydrogenase subfamily. It depends on Zn(2+) as a cofactor.

It carries out the reaction D-glucose + NAD(+) = D-glucono-1,5-lactone + NADH + H(+). The catalysed reaction is D-glucose + NADP(+) = D-glucono-1,5-lactone + NADPH + H(+). Catalyzes the NAD(P)(+)-dependent oxidation of D-glucose to D-gluconate via gluconolactone. Can utilize both NAD(+) and NADP(+) as electron acceptor. Is involved in the degradation of glucose through a non-phosphorylative variant of the Entner-Doudoroff pathway. The polypeptide is Glucose 1-dehydrogenase (Methanocella arvoryzae (strain DSM 22066 / NBRC 105507 / MRE50)).